We begin with the raw amino-acid sequence, 59 residues long: uncharacterized protein (59 aa).

This is an uncharacterized protein from Acidianus convivator (ATV).